A 157-amino-acid chain; its full sequence is NADH-quinone oxidoreductase subunit I (157 aa).

4Fe-4S ferredoxin-type domains are found at residues 47–78 (YLTK…VKPA) and 94–123 (SDFQ…LSNQ). Positions 58, 61, 64, 68, 103, 106, 109, and 113 each coordinate [4Fe-4S] cluster.

The protein belongs to the complex I 23 kDa subunit family. As to quaternary structure, NDH-1 is composed of 14 different subunits. Subunits NuoA, H, J, K, L, M, N constitute the membrane sector of the complex. It depends on [4Fe-4S] cluster as a cofactor.

The protein resides in the cell inner membrane. It catalyses the reaction a quinone + NADH + 5 H(+)(in) = a quinol + NAD(+) + 4 H(+)(out). NDH-1 shuttles electrons from NADH, via FMN and iron-sulfur (Fe-S) centers, to quinones in the respiratory chain. The immediate electron acceptor for the enzyme in this species is believed to be ubiquinone. Couples the redox reaction to proton translocation (for every two electrons transferred, four hydrogen ions are translocated across the cytoplasmic membrane), and thus conserves the redox energy in a proton gradient. The sequence is that of NADH-quinone oxidoreductase subunit I (nuoI) from Protochlamydia amoebophila (strain UWE25).